A 206-amino-acid chain; its full sequence is Small ribosomal subunit protein uS4 (206 aa).

Positions 96–156 (GRLDNVVYRM…EKAKKQSRVK (61 aa)) constitute an S4 RNA-binding domain.

The protein belongs to the universal ribosomal protein uS4 family. In terms of assembly, part of the 30S ribosomal subunit. Contacts protein S5. The interaction surface between S4 and S5 is involved in control of translational fidelity.

Its function is as follows. One of the primary rRNA binding proteins, it binds directly to 16S rRNA where it nucleates assembly of the body of the 30S subunit. Functionally, with S5 and S12 plays an important role in translational accuracy. The polypeptide is Small ribosomal subunit protein uS4 (Salmonella agona (strain SL483)).